The primary structure comprises 98 residues: Small ribosomal subunit protein bS18 (98 aa).

It belongs to the bacterial ribosomal protein bS18 family. Part of the 30S ribosomal subunit. Forms a tight heterodimer with protein bS6.

Its function is as follows. Binds as a heterodimer with protein bS6 to the central domain of the 16S rRNA, where it helps stabilize the platform of the 30S subunit. This chain is Small ribosomal subunit protein bS18, found in Flavobacterium psychrophilum (strain ATCC 49511 / DSM 21280 / CIP 103535 / JIP02/86).